Consider the following 629-residue polypeptide: MTVQDKQRQILPLFEHLTSLTRGGLDRTESDVRLRRVGRLPRGTLFSCFHSEHLKEATELYQILYKADSFADFIHLAQQARDIVNEGLFVYSVSVAILHRDDCRGVTVPPIQEIFPDRFVPAETVNQAVKADLKRQSSDEDVLVEIQETGNILDPEHKLAYFREDIGANAHHWHWHIVYPPTWDASVMSKVKDRKGELFYYMHQQMCARYDCDRLSTGLRRMIPFHNFDEKLEGYSPHLTSLVSGLNYASRPAGLHLRDLVDFVDVQDMARWRERLLYSIDIGHVIDHEGQEIPLDAEHGIDVLGALLESSHDSLNDDYYGNLHNSGHVMMARIHDPDGRFRENPGVMSDTSTSLRDPIFYRYHRFIDNIFQEYKATLPCYEKKDLEFSGVEIVNCTVNAKAPNVINTYMKESTLEMSHGISFKGAVKVKYQHLDHDPFTYSISVENTTGDVKHATVRIFLGPTQDELGNRLRLNEQRRFYIELDKFHAELAAGKNTITRKSSESSVTVSHTPTFEELQRGEGVDENTTEFCSCGWPEHLLVPRGTYKGMDFQLFVMLTDYEDDHVGSHNGQTLCADAVSYCGAKDSKYPDKRAMGFPFDRVIKARTVADFRTTNMSFTDVKIQFKDQV.

The Cu cation site is built by His-172, His-176, His-203, His-324, His-328, and His-364. N-linked (GlcNAc...) asparagine glycans are attached at residues Asn-395 and Asn-447. A compositionally biased stretch (polar residues) spans 503–513 (SESSVTVSHTP). The tract at residues 503–522 (SESSVTVSHTPTFEELQRGE) is disordered. Asn-527 is a glycosylation site (N-linked (GlcNAc...) asparagine). The cysteines at positions 534 and 582 are disulfide-linked. The N-linked (GlcNAc...) asparagine glycan is linked to Asn-615.

The protein belongs to the tyrosinase family. Hemocyanin subfamily. As to quaternary structure, tarantula hemocyanin is a 24-chain polymer with seven different chains identified. As to expression, hemolymph.

The protein localises to the secreted. It is found in the extracellular space. In terms of biological role, hemocyanins are copper-containing oxygen carriers occurring freely dissolved in the hemolymph of many mollusks and arthropods. This is Hemocyanin F chain (HCF) from Aphonopelma sp. (American tarantula).